Here is a 198-residue protein sequence, read N- to C-terminus: Photosystem I assembly protein Ycf4 (198 aa).

The next 2 membrane-spanning stretches (helical) occupy residues 35 to 57 (WFYNIVMLLGGIGFLIVGISSYI) and 70 to 92 (IIFFPQGITMCFYGTCGILFSIN).

This sequence belongs to the Ycf4 family.

It is found in the plastid. The protein localises to the chloroplast thylakoid membrane. In terms of biological role, seems to be required for the assembly of the photosystem I complex. This is Photosystem I assembly protein Ycf4 from Euglena gracilis.